Consider the following 476-residue polypeptide: Cytosolic iron-sulfur assembly component 3 (476 aa).

At A2 the chain carries N-acetylalanine. C24, C71, C74, C77, C190, C246, C395, and C399 together coordinate [4Fe-4S] cluster.

It belongs to the NARF family. As to quaternary structure, external component of the CIA complex. In the CIA complex, interacts directly with CIAO1 and MMS19.

In terms of biological role, component of the cytosolic iron-sulfur protein assembly (CIA) complex, a multiprotein complex that mediates the incorporation of iron-sulfur cluster into extramitochondrial Fe/S proteins. Seems to negatively regulate the level of HIF1A expression, although this effect could be indirect. The polypeptide is Cytosolic iron-sulfur assembly component 3 (Pongo abelii (Sumatran orangutan)).